Consider the following 201-residue polypeptide: 3-isopropylmalate dehydratase small subunit (201 aa).

It belongs to the LeuD family. LeuD type 1 subfamily. As to quaternary structure, heterodimer of LeuC and LeuD.

The enzyme catalyses (2R,3S)-3-isopropylmalate = (2S)-2-isopropylmalate. The protein operates within amino-acid biosynthesis; L-leucine biosynthesis; L-leucine from 3-methyl-2-oxobutanoate: step 2/4. Its function is as follows. Catalyzes the isomerization between 2-isopropylmalate and 3-isopropylmalate, via the formation of 2-isopropylmaleate. The sequence is that of 3-isopropylmalate dehydratase small subunit from Salmonella paratyphi A (strain ATCC 9150 / SARB42).